Consider the following 95-residue polypeptide: MKLVPLGDKVVLKQLVAEETTKSGIVLPGQAKEKPQQAEVVAVGPGGMVDGKEVTMQVKVGDKVIYSKYAGTEVKLDEEEFIVVKQNDIVAIVAD.

It belongs to the GroES chaperonin family. Heptamer of 7 subunits arranged in a ring. Interacts with the chaperonin GroEL.

Its subcellular location is the cytoplasm. Its function is as follows. Together with the chaperonin GroEL, plays an essential role in assisting protein folding. The GroEL-GroES system forms a nano-cage that allows encapsulation of the non-native substrate proteins and provides a physical environment optimized to promote and accelerate protein folding. GroES binds to the apical surface of the GroEL ring, thereby capping the opening of the GroEL channel. In Lachnoclostridium phytofermentans (strain ATCC 700394 / DSM 18823 / ISDg) (Clostridium phytofermentans), this protein is Co-chaperonin GroES.